A 202-amino-acid chain; its full sequence is N-(5'-phosphoribosyl)anthranilate isomerase (202 aa).

Belongs to the TrpF family.

The enzyme catalyses N-(5-phospho-beta-D-ribosyl)anthranilate = 1-(2-carboxyphenylamino)-1-deoxy-D-ribulose 5-phosphate. The protein operates within amino-acid biosynthesis; L-tryptophan biosynthesis; L-tryptophan from chorismate: step 3/5. The sequence is that of N-(5'-phosphoribosyl)anthranilate isomerase from Listeria monocytogenes serotype 4b (strain F2365).